The sequence spans 135 residues: Protein Wnt-7a (135 aa).

Disulfide bonds link C3/C17 and C5/C12. A lipid anchor (O-palmitoleoyl serine; by PORCN) is attached at S9. Positions 41–69 are disordered linker; it reads VEPVRASRNKRPTFLKIKKPLSYRKPMDT. 4 disulfides stabilise this stretch: C81-C112, C97-C107, C111-C134, and C130-C131. N-linked (GlcNAc...) asparagine glycosylation occurs at N98.

Belongs to the Wnt family. Palmitoleoylation is required for efficient binding to frizzled receptors. Depalmitoleoylation leads to Wnt signaling pathway inhibition. As to expression, in embryo, in brain and ventral neural tube; in adults, in brain.

The protein localises to the secreted. Its subcellular location is the extracellular space. It is found in the extracellular matrix. In terms of biological role, ligand for members of the frizzled family of seven transmembrane receptors that functions in the canonical Wnt/beta-catenin signaling pathway. Plays an important role in embryonic development, including dorsal versus ventral patterning during limb development, skeleton development and urogenital tract development. Required for central nervous system (CNS) angiogenesis and blood-brain barrier regulation. In Xenopus laevis (African clawed frog), this protein is Protein Wnt-7a (wnt7a).